Consider the following 260-residue polypeptide: Acetylglutamate kinase (260 aa).

Substrate contacts are provided by residues 46-47 (GG), arginine 68, and asparagine 160.

The protein belongs to the acetylglutamate kinase family. ArgB subfamily.

It localises to the cytoplasm. The enzyme catalyses N-acetyl-L-glutamate + ATP = N-acetyl-L-glutamyl 5-phosphate + ADP. The protein operates within amino-acid biosynthesis; L-arginine biosynthesis; N(2)-acetyl-L-ornithine from L-glutamate: step 2/4. Its function is as follows. Catalyzes the ATP-dependent phosphorylation of N-acetyl-L-glutamate. This is Acetylglutamate kinase from Shewanella oneidensis (strain ATCC 700550 / JCM 31522 / CIP 106686 / LMG 19005 / NCIMB 14063 / MR-1).